The sequence spans 233 residues: MASKVLPQALLVIPSNHSLQCPPLKKQLGFPIDSNRRFSLSSNCRSNLMVSRASSNLFSSNFSSIFSFPARNSFVVRSEAEDSSDAPAESVAVVAEEELPVESEAEAEERPPRQQRVKLGDIMGILNKKAVHAAEELRPVPGIRTGDIVQIRLEVPENKRRLSVYKGIVISRQNAGIHTTIRIRRIIAGVGVEIVFPLYSPNIKEIKVVSHRKVRKARLYYLRDKLPRLSTFK.

The transit peptide at 1–77 (MASKVLPQAL…FPARNSFVVR (77 aa)) directs the protein to the chloroplast.

In terms of assembly, component of the chloroplast large ribosomal subunit (LSU). Mature 70S chloroplast ribosomes of higher plants consist of a small (30S) and a large (50S) subunit. The 30S small subunit contains 1 molecule of ribosomal RNA (16S rRNA) and 24 different proteins. The 50S large subunit contains 3 rRNA molecules (23S, 5S and 4.5S rRNA) and 33 different proteins.

Its subcellular location is the plastid. The protein localises to the chloroplast. Component of the chloroplast ribosome (chloro-ribosome), a dedicated translation machinery responsible for the synthesis of chloroplast genome-encoded proteins, including proteins of the transcription and translation machinery and components of the photosynthetic apparatus. This chain is Large ribosomal subunit protein bL19c (RPL19), found in Spinacia oleracea (Spinach).